The primary structure comprises 359 residues: Nicotinate-nucleotide--dimethylbenzimidazole phosphoribosyltransferase (359 aa).

The Proton acceptor role is filled by glutamate 318.

This sequence belongs to the CobT family. Homodimer.

The enzyme catalyses 5,6-dimethylbenzimidazole + nicotinate beta-D-ribonucleotide = alpha-ribazole 5'-phosphate + nicotinate + H(+). Its pathway is nucleoside biosynthesis; alpha-ribazole biosynthesis; alpha-ribazole from 5,6-dimethylbenzimidazole: step 1/2. Its function is as follows. Catalyzes the synthesis of alpha-ribazole-5'-phosphate from nicotinate mononucleotide (NAMN) and 5,6-dimethylbenzimidazole (DMB). The sequence is that of Nicotinate-nucleotide--dimethylbenzimidazole phosphoribosyltransferase from Escherichia coli O17:K52:H18 (strain UMN026 / ExPEC).